A 498-amino-acid polypeptide reads, in one-letter code: MEAARPAGTFVVVGGGIAGVTCAEQLAINFPAEDILLVTASPVIKAVTNFKQVSKVLEEFDVEEQPSTMLENRFPNIKVIESGVKQLKSDKHCIFTEDGREYVYKKLCLCAGAKPKLICEGNPYVLGIRDTDSAQEFQKQLTKARRIMIVGNGGIALELAYEVEVCEVIWAIKDKAIGNTFFDAGAAEFLTSRLLSEKSEAKLAHKRTIYTVEEAKKETSTKSKADYVGSALGPDWHGGLALKGTEEFSHSIHIETKCEVKKIYLQEEFKIMKKKSLAFPKDHHKSVTVDKEMWPVYVELTNGSIYGCDFLVSATGVTPNVQPFLHGNDFDLGEDGGLRVDEQMRTSLPDIYAAGDICTACWPPSPVWQQMRLWTQARQMGCYAAKCMAAATMGHPIDMDFSFELFAHVTKFFNYKVVLLGKYNAQGLGVDHELMLRCTRGQEYIKVVMHNGRMMGAVLIGETDLEETFENLILNQMDLSSYGEDLLNPDIDIEDYFD.

The residue at position 1 (Met-1) is an N-acetylmethionine.

This sequence belongs to the class-I pyridine nucleotide-disulfide oxidoreductase family. PYROXD1 subfamily. It depends on FAD as a cofactor.

It is found in the nucleus. The protein localises to the cytoplasm. Its subcellular location is the myofibril. It localises to the sarcomere. Probable FAD-dependent oxidoreductase; involved in the cellular oxidative stress response. Required for normal sarcomere structure and muscle fiber integrity. The sequence is that of Pyridine nucleotide-disulfide oxidoreductase domain-containing protein 1 (Pyroxd1) from Rattus norvegicus (Rat).